The chain runs to 347 residues: Haptoglobin (347 aa).

An N-terminal signal peptide occupies residues 1-18 (MRALGAVVALLLCGQLFA). In terms of domain architecture, Sushi spans 31–88 (DSCPKPPEIPKGYVEHMVRYHCQTYYKLRTAGDGVYTLDSNKQWTNKVTGEKLPECEA). Cystine bridges form between Cys52–Cys86 and Cys90–Cys207. The 243-residue stretch at 103–345 (IMGGSLDAKG…ILDWIQTTIA (243 aa)) folds into the Peptidase S1 domain. Residues Asn125, Asn151, Asn183, and Asn232 are each glycosylated (N-linked (GlcNAc...) asparagine). Intrachain disulfides connect Cys250–Cys281 and Cys292–Cys322. Positions 259-264 (VPEKKT) are interaction with CD163.

This sequence belongs to the peptidase S1 family. Tetramer of two alpha and two beta chains; disulfide-linked. The hemoglobin/haptoglobin complex is composed of a haptoglobin dimer bound to two hemoglobin alpha-beta dimers. Interacts with CD163. Interacts with ERGIC3. In terms of tissue distribution, expressed by the liver and secreted in plasma.

It localises to the secreted. As a result of hemolysis, hemoglobin is found to accumulate in the kidney and is secreted in the urine. Haptoglobin captures, and combines with free plasma hemoglobin to allow hepatic recycling of heme iron and to prevent kidney damage. Haptoglobin also acts as an antioxidant, has antibacterial activity and plays a role in modulating many aspects of the acute phase response. Hemoglobin/haptoglobin complexes are rapidly cleared by the macrophage CD163 scavenger receptor expressed on the surface of liver Kupfer cells through an endocytic lysosomal degradation pathway. The sequence is that of Haptoglobin (HP) from Sus scrofa (Pig).